The chain runs to 253 residues: 4-hydroxy-tetrahydrodipicolinate reductase (253 aa).

NAD(+) is bound by residues 8-13, Asp-34, 76-78, and 108-111; these read GAKGRM, GTT, and APNF. His-138 functions as the Proton donor/acceptor in the catalytic mechanism. His-139 is a (S)-2,3,4,5-tetrahydrodipicolinate binding site. Lys-142 functions as the Proton donor in the catalytic mechanism. 148–149 provides a ligand contact to (S)-2,3,4,5-tetrahydrodipicolinate; the sequence is GT.

It belongs to the DapB family.

It is found in the cytoplasm. It catalyses the reaction (S)-2,3,4,5-tetrahydrodipicolinate + NAD(+) + H2O = (2S,4S)-4-hydroxy-2,3,4,5-tetrahydrodipicolinate + NADH + H(+). The catalysed reaction is (S)-2,3,4,5-tetrahydrodipicolinate + NADP(+) + H2O = (2S,4S)-4-hydroxy-2,3,4,5-tetrahydrodipicolinate + NADPH + H(+). It functions in the pathway amino-acid biosynthesis; L-lysine biosynthesis via DAP pathway; (S)-tetrahydrodipicolinate from L-aspartate: step 4/4. Its function is as follows. Catalyzes the conversion of 4-hydroxy-tetrahydrodipicolinate (HTPA) to tetrahydrodipicolinate. The protein is 4-hydroxy-tetrahydrodipicolinate reductase of Bifidobacterium animalis subsp. lactis (strain AD011).